Reading from the N-terminus, the 143-residue chain is HTH-type transcriptional regulator CueR (143 aa).

One can recognise an HTH merR-type domain in the interval 11–79; it reads TYRISELAAL…LSDIKDRLEN (69 aa). The segment at residues 14 to 33 is a DNA-binding region (H-T-H motif); sequence ISELAALAGVTKRTVDYYTN.

Its function is as follows. Transcriptional activator of the copZA operon. This Bacillus subtilis (strain 168) protein is HTH-type transcriptional regulator CueR (cueR).